The following is a 428-amino-acid chain: Enolase (428 aa).

Gln-162 contributes to the (2R)-2-phosphoglycerate binding site. Glu-204 serves as the catalytic Proton donor. Residues Asp-241, Glu-283, and Asp-310 each coordinate Mg(2+). Lys-335, Arg-364, Ser-365, and Lys-386 together coordinate (2R)-2-phosphoglycerate. Residue Lys-335 is the Proton acceptor of the active site.

This sequence belongs to the enolase family. Mg(2+) serves as cofactor.

It is found in the cytoplasm. It localises to the secreted. Its subcellular location is the cell surface. The enzyme catalyses (2R)-2-phosphoglycerate = phosphoenolpyruvate + H2O. It functions in the pathway carbohydrate degradation; glycolysis; pyruvate from D-glyceraldehyde 3-phosphate: step 4/5. Functionally, catalyzes the reversible conversion of 2-phosphoglycerate (2-PG) into phosphoenolpyruvate (PEP). It is essential for the degradation of carbohydrates via glycolysis. The protein is Enolase of Rhodococcus opacus (strain B4).